The chain runs to 503 residues: Probable cytosol aminopeptidase (503 aa).

Mn(2+)-binding residues include Lys-270 and Asp-275. The active site involves Lys-282. Mn(2+) is bound by residues Asp-293, Asp-352, and Glu-354. Residue Arg-356 is part of the active site.

Belongs to the peptidase M17 family. The cofactor is Mn(2+).

The protein resides in the cytoplasm. The enzyme catalyses Release of an N-terminal amino acid, Xaa-|-Yaa-, in which Xaa is preferably Leu, but may be other amino acids including Pro although not Arg or Lys, and Yaa may be Pro. Amino acid amides and methyl esters are also readily hydrolyzed, but rates on arylamides are exceedingly low.. It carries out the reaction Release of an N-terminal amino acid, preferentially leucine, but not glutamic or aspartic acids.. Its function is as follows. Presumably involved in the processing and regular turnover of intracellular proteins. Catalyzes the removal of unsubstituted N-terminal amino acids from various peptides. The polypeptide is Probable cytosol aminopeptidase (Yersinia enterocolitica serotype O:8 / biotype 1B (strain NCTC 13174 / 8081)).